A 454-amino-acid polypeptide reads, in one-letter code: MLAVAVLAAGKGTRMKSALPKVLQPLAGATLVERVLASARNLAPERRLLIVGHQAERVEAQLSSNGGLEFVLQQPQNGTGHAVQQLLAPLQGFQGELLVLNGDVPLLRAETIEALVSTHRSSQADVTLLTARLDDPTGYGRVFADANGRVSAIIEHRDCSDEQRSNNLTNAGIYCFNWGKLAEVLPQLSTDNDQGELYLTDTVQLLDVAMQMEVSDPDEVNGINNRRQLAQCEGVLQQRLRDHWMDEGVTFVDPASCTLSEDCSFGCDVVIEPQTHLRGACRIGDNCRLGPGSLLDNAELGCDVTVVQSVVRDARVGNDVAIGPFAHIRPATDVGDSCKIGNFVEIKKSVIAAGSKVNHLSYIGDAELGANVNVGAGTITANFDGTNKHLTVIGEGSKTGANSVLVAPVVIGKNVTIGAGSTITKAVPDGSLAIGRAKQLTKEGWDRNTQAAQS.

The interval 1–226 (MLAVAVLAAG…PDEVNGINNR (226 aa)) is pyrophosphorylase. UDP-N-acetyl-alpha-D-glucosamine contacts are provided by residues 7–10 (LAAG), K21, Q73, and 78–79 (GT). Residue D103 participates in Mg(2+) binding. G140, E155, N170, and N224 together coordinate UDP-N-acetyl-alpha-D-glucosamine. N224 lines the Mg(2+) pocket. Positions 227–247 (RQLAQCEGVLQQRLRDHWMDE) are linker. The segment at 248–454 (GVTFVDPASC…WDRNTQAAQS (207 aa)) is N-acetyltransferase. R329 and K347 together coordinate UDP-N-acetyl-alpha-D-glucosamine. The active-site Proton acceptor is H359. Residues Y362 and N373 each contribute to the UDP-N-acetyl-alpha-D-glucosamine site. Acetyl-CoA-binding residues include A376, A419, and R436.

This sequence in the N-terminal section; belongs to the N-acetylglucosamine-1-phosphate uridyltransferase family. The protein in the C-terminal section; belongs to the transferase hexapeptide repeat family. In terms of assembly, homotrimer. Mg(2+) is required as a cofactor.

The protein localises to the cytoplasm. It catalyses the reaction alpha-D-glucosamine 1-phosphate + acetyl-CoA = N-acetyl-alpha-D-glucosamine 1-phosphate + CoA + H(+). The enzyme catalyses N-acetyl-alpha-D-glucosamine 1-phosphate + UTP + H(+) = UDP-N-acetyl-alpha-D-glucosamine + diphosphate. Its pathway is nucleotide-sugar biosynthesis; UDP-N-acetyl-alpha-D-glucosamine biosynthesis; N-acetyl-alpha-D-glucosamine 1-phosphate from alpha-D-glucosamine 6-phosphate (route II): step 2/2. The protein operates within nucleotide-sugar biosynthesis; UDP-N-acetyl-alpha-D-glucosamine biosynthesis; UDP-N-acetyl-alpha-D-glucosamine from N-acetyl-alpha-D-glucosamine 1-phosphate: step 1/1. It participates in bacterial outer membrane biogenesis; LPS lipid A biosynthesis. In terms of biological role, catalyzes the last two sequential reactions in the de novo biosynthetic pathway for UDP-N-acetylglucosamine (UDP-GlcNAc). The C-terminal domain catalyzes the transfer of acetyl group from acetyl coenzyme A to glucosamine-1-phosphate (GlcN-1-P) to produce N-acetylglucosamine-1-phosphate (GlcNAc-1-P), which is converted into UDP-GlcNAc by the transfer of uridine 5-monophosphate (from uridine 5-triphosphate), a reaction catalyzed by the N-terminal domain. The protein is Bifunctional protein GlmU of Synechococcus sp. (strain CC9311).